The sequence spans 549 residues: Probable chaperonin-like protein PrmG (549 aa).

Belongs to the chaperonin (HSP60) family.

Functionally, probably plays an essential role in the productive folding of PrmA, and thus in the formation of the active PrmABCD complex. The chain is Probable chaperonin-like protein PrmG (prmG) from Rhodococcus jostii (strain RHA1).